The chain runs to 201 residues: UPF0301 protein MMAR_0053 (201 aa).

This sequence belongs to the UPF0301 (AlgH) family.

The polypeptide is UPF0301 protein MMAR_0053 (Mycobacterium marinum (strain ATCC BAA-535 / M)).